The sequence spans 477 residues: Putative multidrug resistance protein MdtD (477 aa).

A run of 14 helical transmembrane segments spans residues 13–33 (LWIV…VNTA), 50–70 (SVIV…GWLA), 73–93 (VGVQ…SILC), 107–127 (VVQG…VMKI), 139–159 (FVTL…GFLV), 166–186 (WIFL…LLLM), 196–216 (FDIS…LALD), 220–240 (GMGL…AALA), 268–288 (LTAS…TPLF), 291–311 (VGMG…IIGS), 326–348 (GYRN…FPLV), 352–374 (GWIW…RFSA), 394–414 (LLSM…GILI), and 432–452 (AFIY…LAFA).

This sequence belongs to the major facilitator superfamily. TCR/Tet family.

It localises to the cell inner membrane. This Serratia proteamaculans (strain 568) protein is Putative multidrug resistance protein MdtD.